The sequence spans 250 residues: 7-carboxy-7-deazaguanine synthase (250 aa).

Substrate is bound by residues 15-17 (VQG) and Arg-30. Residues 21-250 (LIGLRQVFIR…PQTHRFMGQL (230 aa)) form the Radical SAM core domain. [4Fe-4S] cluster is bound by residues Cys-34, Cys-38, and Cys-41. Position 43 (Thr-43) interacts with Mg(2+). Thr-96 is a substrate binding site. Gly-98 provides a ligand contact to S-adenosyl-L-methionine.

This sequence belongs to the radical SAM superfamily. 7-carboxy-7-deazaguanine synthase family. Homodimer. [4Fe-4S] cluster serves as cofactor. Requires S-adenosyl-L-methionine as cofactor. The cofactor is Mg(2+).

It carries out the reaction 6-carboxy-5,6,7,8-tetrahydropterin + H(+) = 7-carboxy-7-deazaguanine + NH4(+). Its pathway is purine metabolism; 7-cyano-7-deazaguanine biosynthesis. Functionally, catalyzes the complex heterocyclic radical-mediated conversion of 6-carboxy-5,6,7,8-tetrahydropterin (CPH4) to 7-carboxy-7-deazaguanine (CDG), a step common to the biosynthetic pathways of all 7-deazapurine-containing compounds. This is 7-carboxy-7-deazaguanine synthase from Geobacter sulfurreducens (strain ATCC 51573 / DSM 12127 / PCA).